Here is a 219-residue protein sequence, read N- to C-terminus: Charged multivesicular body protein 5 (219 aa).

Residues 22–153 (TNVDGRAESI…EIQEALSRSY (132 aa)) are a coiled coil.

Belongs to the SNF7 family. In terms of assembly, probable peripherally associated component of the endosomal sorting required for transport complex III (ESCRT-III).

It is found in the cytoplasm. The protein resides in the cytosol. Its subcellular location is the endosome membrane. Functionally, probable peripherally associated component of the endosomal sorting required for transport complex III (ESCRT-III) which is involved in multivesicular bodies (MVBs) formation and sorting of endosomal cargo proteins into MVBs. MVBs contain intraluminal vesicles (ILVs) that are generated by invagination and scission from the limiting membrane of the endosome and mostly are delivered to lysosomes enabling degradation of membrane proteins, such as stimulated growth factor receptors, lysosomal enzymes and lipids. The protein is Charged multivesicular body protein 5 (chmp5) of Xenopus laevis (African clawed frog).